The primary structure comprises 645 residues: Serine/threonine-protein kinase BUR1 (645 aa).

Residues 55–379 (YREEEKLGQG…AMKAKKHPFF (325 aa)) enclose the Protein kinase domain. ATP is bound by residues 61-69 (LGQGTFGEV) and Lys-84. Asp-208 functions as the Proton acceptor in the catalytic mechanism. Disordered regions lie at residues 407–428 (EMNESMSQRPPSAPTGHTSTDN), 442–513 (ASIP…KYPA), and 533–645 (RYRN…ADYY). 2 stretches are compositionally biased toward polar residues: residues 409 to 428 (NESMSQRPPSAPTGHTSTDN) and 457 to 474 (IPAQPSASRYNGAATQNI). The span at 477 to 486 (EPIPTAPLPK) shows a compositional bias: pro residues. Residues 578-598 (NRYQNQDYNTSRNTGYNQYSQ) are compositionally biased toward polar residues.

This sequence belongs to the protein kinase superfamily. CMGC Ser/Thr protein kinase family. CDC2/CDKX subfamily.

The protein localises to the nucleus. It catalyses the reaction L-seryl-[protein] + ATP = O-phospho-L-seryl-[protein] + ADP + H(+). It carries out the reaction L-threonyl-[protein] + ATP = O-phospho-L-threonyl-[protein] + ADP + H(+). The enzyme catalyses [DNA-directed RNA polymerase] + ATP = phospho-[DNA-directed RNA polymerase] + ADP + H(+). In terms of biological role, serine/threonine-protein kinase involved in transcription regulation. Phosphorylates the UBC2/RAD6 ubiquitin-conjugating enzyme (E2), leading to monoubiquitination of histone H2B and the silencing of telomeric-associated genes. Also required for histone H3 methylation. Necessary for the recovery from pheromone-induced growth arrest in the cell cycle G1 phase. This is Serine/threonine-protein kinase BUR1 (BUR1) from Kluyveromyces lactis (strain ATCC 8585 / CBS 2359 / DSM 70799 / NBRC 1267 / NRRL Y-1140 / WM37) (Yeast).